We begin with the raw amino-acid sequence, 647 residues long: Pollen receptor-like kinase 2 (647 aa).

Positions 1–21 (MESKCLMFVSIVSVFFMVVNG) are cleaved as a signal peptide. 5 LRR repeats span residues 87 to 109 (LNSL…EFKK), 110 to 134 (LVAL…AFDG), 136 to 159 (GWLK…LVKS), 161 to 183 (KLIE…RHHP), and 185 to 203 (MLNL…SFST). A helical transmembrane segment spans residues 248 to 268 (IVAAAVAALAASLIIIGVVIF). One can recognise a Protein kinase domain in the interval 338–613 (KASAEILGSG…EAVEKMEDLM (276 aa)). Ser340 is modified (phosphoserine). ATP contacts are provided by residues 344-352 (LGSGCFGAS) and Lys366. Ser418 carries the post-translational modification Phosphoserine. Phosphothreonine is present on Thr438. Position 508 is a phosphotyrosine (Tyr508). Positions 620 to 647 (DDDFYSTYASEADGRSSRGLSSEGINLS) are disordered. The span at 637 to 647 (RGLSSEGINLS) shows a compositional bias: polar residues.

This sequence belongs to the protein kinase superfamily. Ser/Thr protein kinase family. As to quaternary structure, part of a complex containing ROPGEF1 and ARAC11/ROP1. The interaction between PRK2, ROPGEF1 and ARAC11/ROP1 is phosphorylation-independent. Interacts with ROPGEF12 (via C-terminus). Interacts with ROPGEF1 (via PRONE domain). In terms of tissue distribution, expressed in pollen and/or in flowers, but not in leaves. Expressed in pollen tube.

The protein resides in the cell membrane. The enzyme catalyses L-seryl-[protein] + ATP = O-phospho-L-seryl-[protein] + ADP + H(+). The catalysed reaction is L-threonyl-[protein] + ATP = O-phospho-L-threonyl-[protein] + ADP + H(+). With respect to regulation, the phosphorylation activity is calcium-independent. Functionally, receptor-like kinase involved in the control of pollen germination and pollen tube polar growth. Phosphorylates ROPGEF1 in its C-terminal region, releasing its auto-inhibition, and thereby activating the ROP1 signaling pathway. May act as a scaffolding protein, recruiting ROPGEF12 to the plasma membrane by binding to its C-terminal domain. Phosphorylates ROPGEF12, releasing its auto-inhibition. The polypeptide is Pollen receptor-like kinase 2 (Arabidopsis thaliana (Mouse-ear cress)).